The chain runs to 315 residues: Annexin Gh1 (315 aa).

Annexin repeat units follow at residues 10–81 (PSVS…LWAL), 82–153 (DPAE…PLVS), 165–236 (TLAK…STVK), and 240–311 (YPEK…VLAG). Ca(2+) contacts are provided by Phe-23, Gly-25, Gly-27, and Glu-67. Positions 253, 255, 257, 295, 297, 298, and 303 each coordinate Ca(2+).

Belongs to the annexin family. Monomer. Trimer. Oligomerization is calcium-independent. Disassembly of the oligomers seems to be required for calcium-binding.

The protein localises to the membrane. In terms of biological role, binds to phospholipid vesicles in a calcium-dependent manner in vitro. Prefers phosphatidyl-serine containing membranes. May have a role in the membrane cytoskeleton scaffolding or exocytotic processes. May be involved in oxidative stress response. The protein is Annexin Gh1 of Gossypium hirsutum (Upland cotton).